A 193-amino-acid chain; its full sequence is Xanthine phosphoribosyltransferase (193 aa).

Leucine 20 and asparagine 27 together coordinate xanthine. A 5-phospho-alpha-D-ribose 1-diphosphate-binding site is contributed by 129–133; that stretch reads ANGKA. Lysine 157 contributes to the xanthine binding site.

The protein belongs to the purine/pyrimidine phosphoribosyltransferase family. Xpt subfamily. In terms of assembly, homodimer.

It is found in the cytoplasm. The catalysed reaction is XMP + diphosphate = xanthine + 5-phospho-alpha-D-ribose 1-diphosphate. It participates in purine metabolism; XMP biosynthesis via salvage pathway; XMP from xanthine: step 1/1. In terms of biological role, converts the preformed base xanthine, a product of nucleic acid breakdown, to xanthosine 5'-monophosphate (XMP), so it can be reused for RNA or DNA synthesis. This is Xanthine phosphoribosyltransferase from Bifidobacterium longum subsp. infantis (strain ATCC 15697 / DSM 20088 / JCM 1222 / NCTC 11817 / S12).